Here is a 323-residue protein sequence, read N- to C-terminus: tRNA dimethylallyltransferase (323 aa).

12 to 19 contacts ATP; that stretch reads GPTASGKT. A substrate-binding site is contributed by 14 to 19; that stretch reads TASGKT. 2 interaction with substrate tRNA regions span residues 37–40 and 161–165; these read DSAL and QRLVR.

The protein belongs to the IPP transferase family. In terms of assembly, monomer. It depends on Mg(2+) as a cofactor.

The catalysed reaction is adenosine(37) in tRNA + dimethylallyl diphosphate = N(6)-dimethylallyladenosine(37) in tRNA + diphosphate. Catalyzes the transfer of a dimethylallyl group onto the adenine at position 37 in tRNAs that read codons beginning with uridine, leading to the formation of N6-(dimethylallyl)adenosine (i(6)A). The sequence is that of tRNA dimethylallyltransferase from Azotobacter vinelandii (strain DJ / ATCC BAA-1303).